Here is a 304-residue protein sequence, read N- to C-terminus: Sulfate adenylyltransferase subunit 2 (304 aa).

Belongs to the PAPS reductase family. CysD subfamily. As to quaternary structure, heterodimer composed of CysD, the smaller subunit, and CysN.

It catalyses the reaction sulfate + ATP + H(+) = adenosine 5'-phosphosulfate + diphosphate. The protein operates within sulfur metabolism; hydrogen sulfide biosynthesis; sulfite from sulfate: step 1/3. Its function is as follows. With CysN forms the ATP sulfurylase (ATPS) that catalyzes the adenylation of sulfate producing adenosine 5'-phosphosulfate (APS) and diphosphate, the first enzymatic step in sulfur assimilation pathway. APS synthesis involves the formation of a high-energy phosphoric-sulfuric acid anhydride bond driven by GTP hydrolysis by CysN coupled to ATP hydrolysis by CysD. The chain is Sulfate adenylyltransferase subunit 2 from Acinetobacter baumannii (strain SDF).